Consider the following 94-residue polypeptide: Progonadoliberin-1 (94 aa).

Residues 1–22 (MAAKILALWLLLAGTVFPQGCC) form the signal peptide. Position 23 is a pyrrolidone carboxylic acid (Gln-23). The residue at position 32 (Gly-32) is a Glycine amide.

It belongs to the GnRH family. In terms of tissue distribution, synthesized in preoptic neurons and is transported to the pituitary in the preoptic-hypophyseal axons.

It is found in the secreted. Stimulates the secretion of gonadotropins. May be responsible for the regulation of the hypothalamic-pituitary-gonadal axis. This is Progonadoliberin-1 (gnrh1) from Haplochromis burtoni (Burton's mouthbrooder).